The following is a 643-amino-acid chain: Transmembrane 9 superfamily member 4 (643 aa).

The signal sequence occupies residues methionine 1–threonine 23. At phenylalanine 24–phenylalanine 282 the chain is on the extracellular side. The chain crosses the membrane as a helical span at residues serine 283–isoleucine 303. Residues arginine 304–serine 347 lie on the Cytoplasmic side of the membrane. Position 313 is a phosphotyrosine (tyrosine 313). Residues leucine 348–leucine 368 traverse the membrane as a helical segment. Over glycine 369–glycine 377 the chain is Extracellular. The chain crosses the membrane as a helical span at residues alanine 378–alanine 398. Residues glycine 399–threonine 417 are Cytoplasmic-facing. The chain crosses the membrane as a helical span at residues alanine 418–glycine 438. The Extracellular segment spans residues lysine 439–methionine 450. The helical transmembrane segment at valine 451–phenylalanine 471 threads the bilayer. The Cytoplasmic portion of the chain corresponds to glycine 472–valine 502. A helical membrane pass occupies residues glycine 503–phenylalanine 523. The Extracellular segment spans residues serine 524–glycine 536. Residues phenylalanine 537–valine 557 form a helical membrane-spanning segment. Topologically, residues tyrosine 558–arginine 571 are cytoplasmic. A helical membrane pass occupies residues asparagine 572 to valine 592. At asparagine 593–glutamate 599 the chain is on the extracellular side. Residues phenylalanine 600–leucine 620 form a helical membrane-spanning segment. Residues threonine 621–aspartate 643 are Cytoplasmic-facing.

Belongs to the nonaspanin (TM9SF) (TC 9.A.2) family.

The protein localises to the membrane. Its subcellular location is the golgi apparatus. The protein resides in the early endosome. Associates with proteins harboring glycine-rich transmembrane domains and ensures their efficient localization to the cell surface. The protein is Transmembrane 9 superfamily member 4 (Tm9sf4) of Rattus norvegicus (Rat).